Here is a 783-residue protein sequence, read N- to C-terminus: B-cell scaffold protein with ankyrin repeats (783 aa).

The tract at residues 1 to 154 (MLPVASGTRG…GYISVIRQIL (154 aa)) is interaction with ITPR2. In terms of domain architecture, TIR spans 25–153 (NAKDILLLYE…DGYISVIRQI (129 aa)). The 128-residue stretch at 199-326 (VLPGEIPCEK…EIPYYEFKHL (128 aa)) folds into the DBB domain. 2 ANK repeats span residues 341–370 (ELPT…ATRA) and 377–407 (DGSD…NTGR). 4 disordered regions span residues 422–521 (FSTY…AASQ), 538–586 (MERS…EDNE), 604–624 (SFII…PPKE), and 641–670 (RQSD…STRD). Over residues 444–479 (RNTDRSEEPERSVEMKEEEAGAEARRSLSEGERESS) the composition is skewed to basic and acidic residues. Positions 505–515 (HCRPPLLPPRP) are enriched in pro residues. Residues 549 to 565 (ARPETREESSREEKKEE) are compositionally biased toward basic and acidic residues. Positions 566 to 586 (AQEEEEEEENPYAFAETEDNE) are enriched in acidic residues. Residues 610-620 (PPAPTPRPTHI) show a composition bias toward pro residues. Positions 641 to 660 (RQSDGDKFYSLPKKPDKTRM) are enriched in basic and acidic residues. At Tyr649 the chain carries Phosphotyrosine.

In terms of assembly, interacts with LYN, ITPR1 and ITPR2. Post-translationally, phosphorylated on tyrosines upon BCR activation. Specifically expressed in spleen. Highly expressed in immature B-cells and recirculating B-cells, and at low levels in pro-B and pre-B cells.

Involved in B-cell receptor (BCR)-induced Ca(2+) mobilization from intracellular stores. Promotes Lyn-mediated phosphorylation of IP3 receptors 1 and 2. This is B-cell scaffold protein with ankyrin repeats (Bank1) from Mus musculus (Mouse).